Consider the following 84-residue polypeptide: Large ribosomal subunit protein bL27 (84 aa).

Residues 1–22 (MAHKKAGGSTRNGRDSESKRLG) are disordered.

Belongs to the bacterial ribosomal protein bL27 family.

In Shewanella woodyi (strain ATCC 51908 / MS32), this protein is Large ribosomal subunit protein bL27.